The following is a 478-amino-acid chain: Transposase for insertion sequence element IS231B (478 aa).

It belongs to the transposase 11 family.

In terms of biological role, involved in the transposition of the insertion sequence. This chain is Transposase for insertion sequence element IS231B, found in Bacillus thuringiensis subsp. berliner.